Consider the following 29-residue polypeptide: Toxin II.9 (29 aa).

The LCN-type CS-alpha/beta domain maps to 2–29 (KDGYLVNKYTGCKVNCYKLGENKFCNRE).

This sequence belongs to the long (4 C-C) scorpion toxin superfamily. Sodium channel inhibitor family. Beta subfamily. In terms of tissue distribution, expressed by the venom gland.

Its subcellular location is the secreted. Binds to sodium channels (Nav) and shift the voltage of activation toward more negative potentials. This toxin is active on crustaceans. The chain is Toxin II.9 from Centruroides limpidus (Mexican scorpion).